A 190-amino-acid chain; its full sequence is Crossover junction endodeoxyribonuclease RuvC (190 aa).

Catalysis depends on residues Asp-8, Glu-67, and Asp-139. Positions 8, 67, and 139 each coordinate Mg(2+).

The protein belongs to the RuvC family. In terms of assembly, homodimer which binds Holliday junction (HJ) DNA. The HJ becomes 2-fold symmetrical on binding to RuvC with unstacked arms; it has a different conformation from HJ DNA in complex with RuvA. In the full resolvosome a probable DNA-RuvA(4)-RuvB(12)-RuvC(2) complex forms which resolves the HJ. Mg(2+) is required as a cofactor.

It is found in the cytoplasm. It carries out the reaction Endonucleolytic cleavage at a junction such as a reciprocal single-stranded crossover between two homologous DNA duplexes (Holliday junction).. The RuvA-RuvB-RuvC complex processes Holliday junction (HJ) DNA during genetic recombination and DNA repair. Endonuclease that resolves HJ intermediates. Cleaves cruciform DNA by making single-stranded nicks across the HJ at symmetrical positions within the homologous arms, yielding a 5'-phosphate and a 3'-hydroxyl group; requires a central core of homology in the junction. The consensus cleavage sequence is 5'-(A/T)TT(C/G)-3'. Cleavage occurs on the 3'-side of the TT dinucleotide at the point of strand exchange. HJ branch migration catalyzed by RuvA-RuvB allows RuvC to scan DNA until it finds its consensus sequence, where it cleaves and resolves the cruciform DNA. This is Crossover junction endodeoxyribonuclease RuvC from Haemophilus influenzae (strain 86-028NP).